Reading from the N-terminus, the 878-residue chain is Lon protease 2 (878 aa).

The region spanning 85 to 281 (LYLLPVKERP…KVLSLFKHEI (197 aa)) is the Lon N-terminal domain. Residue 434-441 (GPPGVGKT) coordinates ATP. The 183-residue stretch at 668–850 (NQQMGTVTGL…DDVAKLTFHI (183 aa)) folds into the Lon proteolytic domain. Catalysis depends on residues serine 756 and lysine 799.

Belongs to the peptidase S16 family. In terms of assembly, homohexamer. Organized in a ring with a central cavity.

The protein localises to the cytoplasm. The enzyme catalyses Hydrolysis of proteins in presence of ATP.. In terms of biological role, ATP-dependent serine protease that mediates the selective degradation of mutant and abnormal proteins as well as certain short-lived regulatory proteins. Required for cellular homeostasis and for survival from DNA damage and developmental changes induced by stress. Degrades polypeptides processively to yield small peptide fragments that are 5 to 10 amino acids long. Binds to DNA in a double-stranded, site-specific manner. This Hydrogenovibrio crunogenus (strain DSM 25203 / XCL-2) (Thiomicrospira crunogena) protein is Lon protease 2.